Consider the following 561-residue polypeptide: Carboxylesterase patB (561 aa).

Positions 1 to 19 (MQIINWASLLLVTWETVVA) are cleaved as a signal peptide. Residues asparagine 38, asparagine 69, and asparagine 109 are each glycosylated (N-linked (GlcNAc...) asparagine). Serine 263 serves as the catalytic Acyl-ester intermediate. Position 263 (serine 263) interacts with substrate. Residue asparagine 316 is glycosylated (N-linked (GlcNAc...) asparagine). Glutamate 385 functions as the Charge relay system in the catalytic mechanism. N-linked (GlcNAc...) asparagine glycosylation is found at asparagine 393, asparagine 412, asparagine 429, and asparagine 496.

This sequence belongs to the type-B carboxylesterase/lipase family.

It localises to the cytoplasm. It is found in the cytosol. The enzyme catalyses a carboxylic ester + H2O = an alcohol + a carboxylate + H(+). Its pathway is mycotoxin biosynthesis; patulin biosynthesis. In terms of biological role, carboxylesterase; part of the gene cluster that mediates the biosynthesis of patulin, an acetate-derived tetraketide mycotoxin produced by several fungal species that shows antimicrobial properties against several bacteria. The function of patB in patulin synthesis has still to be characterized. The pathway begins with the synthesis of 6-methylsalicylic acid by the polyketide synthase (PKS) patK via condensation of acetate and malonate units. The 6-methylsalicylic acid decarboxylase patG then catalyzes the decarboxylation of 6-methylsalicylic acid to yield m-cresol (also known as 3-methylphenol). These first reactions occur in the cytosol. The intermediate m-cresol is then transported into the endoplasmic reticulum where the cytochrome P450 monooxygenase patH converts it to m-hydroxybenzyl alcohol, which is further converted to gentisyl alcohol by the cytochrome P450 monooxygenase patI. The oxidoreductases patJ and patO further convert gentisyl alcohol to isoepoxydon in the vacuole. PatN catalyzes then the transformation of isoepoxydon into phyllostine. The cluster protein patF is responsible for the conversion from phyllostine to neopatulin whereas the alcohol dehydrogenase patD converts neopatulin to E-ascladiol. The steps between isoepoxydon and E-ascladiol occur in the cytosol, and E-ascladiol is probably secreted to the extracellular space by one of the cluster-specific transporters patC or patM. Finally, the secreted patulin synthase patE catalyzes the conversion of E-ascladiol to patulin. This is Carboxylesterase patB from Penicillium expansum (Blue mold rot fungus).